Consider the following 152-residue polypeptide: Ribosome maturation factor RimP (152 aa).

This sequence belongs to the RimP family.

It is found in the cytoplasm. Required for maturation of 30S ribosomal subunits. This is Ribosome maturation factor RimP from Citrobacter koseri (strain ATCC BAA-895 / CDC 4225-83 / SGSC4696).